The following is a 496-amino-acid chain: E3 ubiquitin-protein ligase Hakai (496 aa).

The disordered stretch occupies residues 35–60 (PNKIKPAPRPQRNMNRIPTKPQPGFD). An RING-type; degenerate zinc finger spans residues 104–144 (CDKCGLPIKIYGRMIPCKHVFCYDCALMHEKKADKLCPGTL). The HYB domain stretch occupies residues 157–215 (CNDPVQRIEQCARGSLFMCSIVQGCKRTYLSQRDLQAHINHRHMRASKPTARPQPEPIH). The C2H2-type zinc finger occupies 173 to 199 (FMCSIVQGCKRTYLSQRDLQAHINHRH). The segment covering 304 to 314 (VPIQDDSNSGA) has biased composition (polar residues). Residues 304–496 (VPIQDDSNSG…DQARYRPYYQ (193 aa)) are disordered. 3 stretches are compositionally biased toward pro residues: residues 350 to 360 (APPPPPPPPIS), 380 to 397 (GPPPPMTTAPPPITPPPG), and 407 to 430 (MNHPPPGPPPQHGGPPVNAPPPHH). The segment covering 434-449 (SSMPQFNEDQGTLSPP) has biased composition (polar residues). Positions 464-483 (PRGPPPRMQGPPSQAPMPGP) are enriched in pro residues.

This sequence belongs to the Hakai family. Homodimer. Interacts with tyrosine-phosphorylated SRC substrates. Component of the WMM complex, a N6-methyltransferase complex composed of a catalytic subcomplex, named MAC, and of an associated subcomplex, named MACOM. Component of the MACOM subcomplex.

The protein resides in the nucleus speckle. It localises to the nucleus. The protein localises to the nucleoplasm. The catalysed reaction is S-ubiquitinyl-[E2 ubiquitin-conjugating enzyme]-L-cysteine + [acceptor protein]-L-lysine = [E2 ubiquitin-conjugating enzyme]-L-cysteine + N(6)-ubiquitinyl-[acceptor protein]-L-lysine.. It functions in the pathway protein modification; protein ubiquitination. Its function is as follows. E3 ubiquitin-protein ligase that mediates ubiquitination of several tyrosine-phosphorylated Src substrates. Associated component of the WMM complex, a complex that mediates N6-methyladenosine (m6A) methylation of RNAs, a modification that plays a role in the efficiency of mRNA splicing and RNA processing. This is E3 ubiquitin-protein ligase Hakai from Xenopus laevis (African clawed frog).